Here is a 528-residue protein sequence, read N- to C-terminus: DNA primase large subunit (528 aa).

The segment at 210 to 239 (NEEHQRKQYFQQEKFIKLPFENVIELVGNR) is H-T-H-like motif. Cys-336, Cys-417, Cys-434, and Cys-474 together coordinate [4Fe-4S] cluster.

It belongs to the eukaryotic-type primase large subunit family. In terms of assembly, DNA polymerase alpha:primase is a four subunit enzyme complex, which is assembled throughout the cell cycle, and consists of the two DNA polymerase subunits A POL1 and B POL12, and the DNA primase large PRI2 and small PRI1 subunits. Interacts with MCM10. [4Fe-4S] cluster is required as a cofactor.

DNA primase is the polymerase that synthesizes small RNA primers for the Okazaki fragments made during discontinuous DNA replication. In a complex with DNA polymerase alpha (DNA polymerase alpha:primase) constitutes a replicative polymerase. Both primase components participate in formation of the active center, but the ATP-binding site is exclusively located on p48. The chain is DNA primase large subunit (PRI2) from Saccharomyces cerevisiae (strain ATCC 204508 / S288c) (Baker's yeast).